Here is a 226-residue protein sequence, read N- to C-terminus: HTH-type transcriptional regulator TcmR (226 aa).

A compositionally biased stretch (polar residues) spans 1–16 (MDSAETDTPSTRSTPN). The disordered stretch occupies residues 1 to 25 (MDSAETDTPSTRSTPNGPGLRQRKL). The region spanning 26 to 86 (RRTRDQLIRE…TPISAIDEAF (61 aa)) is the HTH tetR-type domain. Residues 49 to 68 (TVEQIAEAVEVHPRTFFRHF) constitute a DNA-binding region (H-T-H motif).

Its pathway is antibiotic biosynthesis; tetracenomycin C biosynthesis. Functionally, represses transcription of the divergently oriented tcmR and tcmA (tetracenomycin C resistance and export) genes by binding to an intergenic operator region. This binding is inhibited by tetracenomycin C. The sequence is that of HTH-type transcriptional regulator TcmR (tcmR) from Streptomyces glaucescens.